A 69-amino-acid polypeptide reads, in one-letter code: Sodium channel toxin (69 aa).

Positions 2–66 constitute an LCN-type CS-alpha/beta domain; that stretch reads KNDYPVDTAK…SPTKTSGRCN (65 aa). Intrachain disulfides connect C14/C65, C18/C41, C27/C48, and C31/C50.

It belongs to the long (4 C-C) scorpion toxin superfamily. Sodium channel inhibitor family. In terms of tissue distribution, expressed by the venom gland.

Its subcellular location is the secreted. In terms of biological role, inhibits voltage-gated sodium channels (Nav). The chain is Sodium channel toxin from Tityus metuendus (Scorpion).